Consider the following 250-residue polypeptide: MLLIPAIDLKDGQCVRLKQGDMDQATIFHEEPAVMARHWVDRGARRLHLVDLNGAFAGKPKNEDAIRAIIEEVGGEIPVQLGGGIRDLNTIERYLDDGLEYVIIGTAAVKNPGFLLEACTAFGGHIIVGLDAKDGKVATDGWSKLTGHEVADLARKFEDYGCESIIYTDIGRDGMLQGINIEATVRLARAVKIPVIASGGLSNLGDIEALCEVEDEGIEGVICGRAIYSGDLDFAAAQTHADRLRESDDA.

Asp-8 functions as the Proton acceptor in the catalytic mechanism. Asp-131 serves as the catalytic Proton donor.

This sequence belongs to the HisA/HisF family.

It is found in the cytoplasm. The catalysed reaction is 1-(5-phospho-beta-D-ribosyl)-5-[(5-phospho-beta-D-ribosylamino)methylideneamino]imidazole-4-carboxamide = 5-[(5-phospho-1-deoxy-D-ribulos-1-ylimino)methylamino]-1-(5-phospho-beta-D-ribosyl)imidazole-4-carboxamide. The protein operates within amino-acid biosynthesis; L-histidine biosynthesis; L-histidine from 5-phospho-alpha-D-ribose 1-diphosphate: step 4/9. The protein is 1-(5-phosphoribosyl)-5-[(5-phosphoribosylamino)methylideneamino] imidazole-4-carboxamide isomerase of Paraburkholderia phymatum (strain DSM 17167 / CIP 108236 / LMG 21445 / STM815) (Burkholderia phymatum).